The sequence spans 78 residues: RNA-binding protein Hfq (78 aa).

Residues 10 to 69 (DPFLNTLRKEHVPVSIYLVNGIKLQGQIESFDQYVVLLRNTVTQMVYKHAISTVVPARAV) enclose the Sm domain.

This sequence belongs to the Hfq family. As to quaternary structure, homohexamer.

In terms of biological role, RNA chaperone that binds small regulatory RNA (sRNAs) and mRNAs to facilitate mRNA translational regulation in response to envelope stress, environmental stress and changes in metabolite concentrations. Also binds with high specificity to tRNAs. This is RNA-binding protein Hfq from Bordetella petrii (strain ATCC BAA-461 / DSM 12804 / CCUG 43448).